A 667-amino-acid chain; its full sequence is mRNA cap guanine-N(7) methyltransferase (667 aa).

Over residues 1-19 (MYDPARDSWEERDGDEARS) the composition is skewed to basic and acidic residues. The tract at residues 1–272 (MYDPARDSWE…RRRQEERERA (272 aa)) is disordered. Positions 33–52 (FSSSEQIYGASGENNNTTDL) are enriched in polar residues. Over residues 72–87 (SPPAQSTTQTPPSIST) the composition is skewed to low complexity. Residues 88–128 (HVQSPVNPAAQEASNTQSLTSAAQNQSNKSTTTMDNTSGSA) show a composition bias toward polar residues. Over residues 132–142 (PRADPSDKSNR) the composition is skewed to basic and acidic residues. The segment covering 147 to 156 (ASPTDQNGSQ) has biased composition (polar residues). The segment covering 256-272 (LVDRETLRRRQEERERA) has biased composition (basic and acidic residues). The mRNA cap 0 methyltransferase domain occupies 309-667 (SKIKGLRSFN…FYHAFCFYKV (359 aa)). Residue 318 to 319 (NN) participates in mRNA binding. Residues Lys322, Gly365, Asp389, Asp427, 470–472 (MFT), and Tyr475 each bind S-adenosyl-L-methionine. Residues 521 to 535 (KKERQSQAKKEKTDE) are compositionally biased toward basic and acidic residues. The disordered stretch occupies residues 521 to 547 (KKERQSQAKKEKTDEAPEDGEVEEDDG). The segment covering 536–547 (APEDGEVEEDDG) has biased composition (acidic residues).

The protein belongs to the class I-like SAM-binding methyltransferase superfamily. mRNA cap 0 methyltransferase family.

Its subcellular location is the nucleus. It carries out the reaction a 5'-end (5'-triphosphoguanosine)-ribonucleoside in mRNA + S-adenosyl-L-methionine = a 5'-end (N(7)-methyl 5'-triphosphoguanosine)-ribonucleoside in mRNA + S-adenosyl-L-homocysteine. Functionally, responsible for methylating the 5'-cap structure of mRNAs. The chain is mRNA cap guanine-N(7) methyltransferase (abd1) from Neosartorya fischeri (strain ATCC 1020 / DSM 3700 / CBS 544.65 / FGSC A1164 / JCM 1740 / NRRL 181 / WB 181) (Aspergillus fischerianus).